The chain runs to 378 residues: Probable pectin lyase A (378 aa).

Positions 1–19 are cleaved as a signal peptide; sequence MKFPAFITAIISIASLSSA. Intrachain disulfides connect C82–C101 and C91–C225. R255 is an active-site residue. A disulfide bridge links C321 with C329.

The protein belongs to the polysaccharide lyase 1 family.

Its subcellular location is the secreted. The enzyme catalyses Eliminative cleavage of (1-&gt;4)-alpha-D-galacturonan methyl ester to give oligosaccharides with 4-deoxy-6-O-methyl-alpha-D-galact-4-enuronosyl groups at their non-reducing ends.. Functionally, pectinolytic enzymes consist of four classes of enzymes: pectin lyase, polygalacturonase, pectin methylesterase and rhamnogalacturonase. Among pectinolytic enzymes, pectin lyase is the most important in depolymerization of pectin, since it cleaves internal glycosidic bonds of highly methylated pectins. The chain is Probable pectin lyase A (pelA) from Aspergillus terreus (strain NIH 2624 / FGSC A1156).